We begin with the raw amino-acid sequence, 185 residues long: Large ribosomal subunit protein uL5 (185 aa).

The protein belongs to the universal ribosomal protein uL5 family. Part of the 50S ribosomal subunit; part of the 5S rRNA/L5/L18/L25 subcomplex. Contacts the 5S rRNA and the P site tRNA. Forms a bridge to the 30S subunit in the 70S ribosome.

In terms of biological role, this is one of the proteins that bind and probably mediate the attachment of the 5S RNA into the large ribosomal subunit, where it forms part of the central protuberance. In the 70S ribosome it contacts protein S13 of the 30S subunit (bridge B1b), connecting the 2 subunits; this bridge is implicated in subunit movement. Contacts the P site tRNA; the 5S rRNA and some of its associated proteins might help stabilize positioning of ribosome-bound tRNAs. The sequence is that of Large ribosomal subunit protein uL5 from Bradyrhizobium sp. (strain ORS 278).